A 655-amino-acid polypeptide reads, in one-letter code: MARTKCKTKTVANPRTGVRKTAKDLSEPVRQDAVSRRRPTTLPFVGNTSSRPRVFYDVLAKKNVVFPNVKAEYHYRVRNAPKIDPKNFGTTLPICYSSIGPAKTLELRPLGRLPPHIIKALNDHYVQLTRGSMVPAADLYNNGDHPAEQRIPTMLNENEYLRLIQELEEEEKSKQFSATSSSAPHVNPYSAQHLVNGEIIGIFVIYGTGLVTRAVCSQTREMFTAHVLPEWKASKVIDVIRRLQIPTDISSMTADEIRLSELCISKRMEIIKSNDRYILMNPCESATIHSYATERLDEITENDVMSIYQKVVEIVRFCHSRKVILQNFKPRSFYLKKDAHNKWVVRPCFLQDMSCEEDQSEAQFTRRSVCVPFMAPEMLTAESRTHHSYSTELWGLGVLLYILLTGKYPFHENSMPLLFRTIKFKQHRWPFNFISSKSRNIVNMLLKKAPATRMNLEDLWNQVNGDFPEIRCRSNIILKKQDMIVKMDLFEMYYNTYKDRLLPKNVLPMYEEMKACRNDSTILTEMAKRDFRSIQEQMKRRIETKPTEYQTLVMQVRLQQINQLFFEKEVSQAQKQHRAPRLVQLKCSDISKELLLPGDIYPISEHYHPSQQPVDKVVYKLLSDANSLAFPTVMKGTVPKSYPPPVFKGLDISPS.

The interval 1–35 (MARTKCKTKTVANPRTGVRKTAKDLSEPVRQDAVS) is disordered. Residues 21–35 (TAKDLSEPVRQDAVS) show a composition bias toward basic and acidic residues. The region spanning 200–470 (IGIFVIYGTG…NQVNGDFPEI (271 aa)) is the Protein kinase domain. ATP is bound by residues 206–214 (YGTGLVTRA) and K235.

Belongs to the protein kinase superfamily. CAMK Ser/Thr protein kinase family. May interact with transcription factor cebp-1 (via N-terminus). As to expression, expressed in epidermis, pharynx, intestine, a subset of head neurons and motoneurons.

It is found in the nucleus. Functionally, adapter protein that regulates different signaling pathways. Required for larval development and viability. Involved in negatively modulating pmk-1 p38/MAPK signaling. Involved in innate immunity, acting either in a manner dependent upon, or independent of, the pmk-1 or pmk-3 p38/MAPK pathways. Has a protective role in response to infection by the Gram-negative bacterium P.aeruginosa, acting by negatively modulating expression of cebp-1, and regulating the pmk-1 p38/MAPK pathway, leading to activation of transcription factor skn-1. Required to prevent P.aeruginosa toxin ToxA-mediated lethality, probably acting via modulating the effects of translational inhibition caused by the toxin. By regulating the up-regulation in the epidermis of antimicrobial peptides nlp-29 and nlp-31, plays a role in resistance to fungal infection. In Caenorhabditis elegans, this protein is Protein nipi-3.